The following is a 132-amino-acid chain: D-ribose pyranase (132 aa).

The active-site Proton donor is His20. Substrate contacts are provided by residues Asp28, His98, and Tyr121–Asn123.

This sequence belongs to the RbsD / FucU family. RbsD subfamily. As to quaternary structure, homodecamer.

The protein localises to the cytoplasm. The catalysed reaction is beta-D-ribopyranose = beta-D-ribofuranose. The protein operates within carbohydrate metabolism; D-ribose degradation; D-ribose 5-phosphate from beta-D-ribopyranose: step 1/2. Its function is as follows. Catalyzes the interconversion of beta-pyran and beta-furan forms of D-ribose. The sequence is that of D-ribose pyranase from Kosmotoga olearia (strain ATCC BAA-1733 / DSM 21960 / TBF 19.5.1).